The primary structure comprises 184 residues: Shikimate kinase (184 aa).

20–25 (GVGKSR) contacts ATP. Residue Ser24 participates in Mg(2+) binding. Substrate contacts are provided by Asp42, Arg66, and Gly88. Residue Arg127 coordinates ATP. Arg146 is a substrate binding site. Residue Arg162 coordinates ATP.

The protein belongs to the shikimate kinase family. In terms of assembly, monomer. Mg(2+) serves as cofactor.

It is found in the cytoplasm. The enzyme catalyses shikimate + ATP = 3-phosphoshikimate + ADP + H(+). It functions in the pathway metabolic intermediate biosynthesis; chorismate biosynthesis; chorismate from D-erythrose 4-phosphate and phosphoenolpyruvate: step 5/7. Catalyzes the specific phosphorylation of the 3-hydroxyl group of shikimic acid using ATP as a cosubstrate. The chain is Shikimate kinase from Thermus thermophilus (strain ATCC BAA-163 / DSM 7039 / HB27).